A 478-amino-acid polypeptide reads, in one-letter code: Bifunctional protein HldE (478 aa).

Positions 1–318 (MKVTLPDFRQ…ENAIRGRADT (318 aa)) are ribokinase. 195–198 (NLSE) contributes to the ATP binding site. The active site involves Asp264. A cytidylyltransferase region spans residues 344 to 478 (MTNGCFDILH…NTIKANASKS (135 aa)).

The protein in the N-terminal section; belongs to the carbohydrate kinase PfkB family. In the C-terminal section; belongs to the cytidylyltransferase family. As to quaternary structure, homodimer.

It carries out the reaction D-glycero-beta-D-manno-heptose 7-phosphate + ATP = D-glycero-beta-D-manno-heptose 1,7-bisphosphate + ADP + H(+). It catalyses the reaction D-glycero-beta-D-manno-heptose 1-phosphate + ATP + H(+) = ADP-D-glycero-beta-D-manno-heptose + diphosphate. It participates in nucleotide-sugar biosynthesis; ADP-L-glycero-beta-D-manno-heptose biosynthesis; ADP-L-glycero-beta-D-manno-heptose from D-glycero-beta-D-manno-heptose 7-phosphate: step 1/4. It functions in the pathway nucleotide-sugar biosynthesis; ADP-L-glycero-beta-D-manno-heptose biosynthesis; ADP-L-glycero-beta-D-manno-heptose from D-glycero-beta-D-manno-heptose 7-phosphate: step 3/4. Its function is as follows. Catalyzes the phosphorylation of D-glycero-D-manno-heptose 7-phosphate at the C-1 position to selectively form D-glycero-beta-D-manno-heptose-1,7-bisphosphate. Catalyzes the ADP transfer from ATP to D-glycero-beta-D-manno-heptose 1-phosphate, yielding ADP-D-glycero-beta-D-manno-heptose. This chain is Bifunctional protein HldE, found in Pectobacterium carotovorum subsp. carotovorum (strain PC1).